Reading from the N-terminus, the 640-residue chain is Chaperone protein DnaK (640 aa).

Position 199 is a phosphothreonine; by autocatalysis (Thr199). Residues 603-640 (YAAGETESSAAEPGEPQEKTVDAEVVDAEFEEVKDDKK) form a disordered region. Residues 626 to 640 (EVVDAEFEEVKDDKK) show a composition bias toward acidic residues.

This sequence belongs to the heat shock protein 70 family.

In terms of biological role, acts as a chaperone. In Methylobacillus flagellatus (strain ATCC 51484 / DSM 6875 / VKM B-1610 / KT), this protein is Chaperone protein DnaK.